The chain runs to 433 residues: Pyroglutamylated RF-amide peptide receptor (433 aa).

Residues 1 to 46 (MQALNITAEQFSRLLSAHNLTREQFIHRYGLRPLVYTPELPARAKL) lie on the Extracellular side of the membrane. 2 N-linked (GlcNAc...) asparagine glycosylation sites follow: Asn-5 and Asn-19. A helical transmembrane segment spans residues 47-67 (AFALAGALIFALALFGNSLVI). The Cytoplasmic segment spans residues 68–81 (YVVTRSKAMRTVTN). A helical membrane pass occupies residues 82 to 102 (IFICSLALSDLLIAFFCIPVT). At 103 to 120 (MLQNISDKWLGGAFICKM) the chain is on the extracellular side. The chain crosses the membrane as a helical span at residues 121–141 (VPFVQSTAVVTEILTMTCIAV). Topologically, residues 142-162 (ERHQGLIHPFKMKWQYTTRRA) are cytoplasmic. The chain crosses the membrane as a helical span at residues 163 to 183 (FTILGVVWLAAIIVGSPMWHV). Residues 184 to 212 (QRLEIKYDFLYEKEHVCCLEEWASPMHQR) lie on the Extracellular side of the membrane. Residues 213 to 233 (IYTTFILVILFLLPLVVMLVL) traverse the membrane as a helical segment. Residues 234 to 271 (YSKIGYELWIKKRVGDSSALQTIHGKEMSKIARKKKRA) are Cytoplasmic-facing. The chain crosses the membrane as a helical span at residues 272 to 292 (VVMMVTVVALFAACWAPFHVV). The Extracellular segment spans residues 293 to 313 (HMMVEYSNFEKEYDDVTIKMV). Residues 314–334 (FAVAQTIGFFNSICNPFVYAF) traverse the membrane as a helical segment. Residues 335–433 (MNENFKKNFL…NSTFGSGHEL (99 aa)) are Cytoplasmic-facing.

Belongs to the G-protein coupled receptor 1 family. In terms of tissue distribution, expressed widely in the brain with high levels in the cortex and hypothalamus, and moderate levels in the brain stem, caudate nucleus, midbrain hippocampus, thalamus, trigeminal ganglia and spinal cord. Particularly strong expression detected in the mitral cell layer of the olfactory bulb, accessory olfactory bulb, island of Calleja and nucleus of the solitary tract. In peripheral tissues, expressed at moderate levels in the eye, liver, kidney, pituitary gland, testis and thymus.

It localises to the cell membrane. Receptor for the orexigenic neuropeptide QRFP. The activity of this receptor is mediated by G proteins that modulate adenylate cyclase activity and intracellular calcium levels. The protein is Pyroglutamylated RF-amide peptide receptor (Qrfpr) of Mus musculus (Mouse).